The primary structure comprises 387 residues: tRNA pseudouridine synthase B (387 aa).

Catalysis depends on Asp-43, which acts as the Nucleophile.

It belongs to the pseudouridine synthase TruB family. Type 1 subfamily.

It catalyses the reaction uridine(55) in tRNA = pseudouridine(55) in tRNA. Functionally, responsible for synthesis of pseudouridine from uracil-55 in the psi GC loop of transfer RNAs. The protein is tRNA pseudouridine synthase B of Bifidobacterium longum (strain DJO10A).